The chain runs to 226 residues: Cold-regulated 413 inner membrane protein 2, chloroplastic (226 aa).

A chloroplast-targeting transit peptide spans M1–Y76. The Stromal portion of the chain corresponds to A77 to P79. The chain crosses the membrane as a helical span at residues M80–A100. Over R101–T103 the chain is Chloroplast intermembrane. Residues G104–S124 form a helical membrane-spanning segment. At W125–E129 the chain is on the stromal side. A helical membrane pass occupies residues Y130–E150. The Chloroplast intermembrane segment spans residues L151 to E152. A helical transmembrane segment spans residues L153–G173. Residues K174–E176 lie on the Stromal side of the membrane. A helical membrane pass occupies residues G177 to G197. The Chloroplast intermembrane portion of the chain corresponds to T198 to Q205. The helical transmembrane segment at N206–I226 threads the bilayer.

Belongs to the Cold-regulated 413 protein family.

It is found in the plastid. Its subcellular location is the chloroplast inner membrane. In Arabidopsis thaliana (Mouse-ear cress), this protein is Cold-regulated 413 inner membrane protein 2, chloroplastic (COR413IM2).